The chain runs to 159 residues: U-actitoxin-Avd13a/b (159 aa).

The signal sequence occupies residues 1–18 (MKSIFLVFFAVCLVKAEA). Residues 19 to 26 (GKGRKREP) constitute a propeptide that is removed on maturation. Cystine bridges form between Cys-33–Cys-45 and Cys-36–Cys-52. The propeptide occupies 59–60 (EP). 2 disulfides stabilise this stretch: Cys-67–Cys-79 and Cys-70–Cys-86. Residues 93 to 94 (EP) constitute a propeptide that is removed on maturation. 2 disulfide bridges follow: Cys-101-Cys-113 and Cys-104-Cys-120. Residues 127-128 (EP) constitute a propeptide that is removed on maturation. Disulfide bonds link Cys-135–Cys-147 and Cys-138–Cys-154.

This sequence belongs to the sea anemone BBH family.

The protein resides in the secreted. The protein localises to the nematocyst. Inhibits ion channels. In Anemonia viridis (Snakelocks anemone), this protein is U-actitoxin-Avd13a/b.